We begin with the raw amino-acid sequence, 330 residues long: Putative protein N-methyltransferase FAM86B1 (330 aa).

S-adenosyl-L-methionine contacts are provided by residues tryptophan 139, 165 to 167 (GSG), tryptophan 228, and alanine 247.

This sequence belongs to the class I-like SAM-binding methyltransferase superfamily. EEF2KMT family.

The sequence is that of Putative protein N-methyltransferase FAM86B1 from Homo sapiens (Human).